Consider the following 582-residue polypeptide: Inositol transporter 4 (582 aa).

Transmembrane regions (helical) follow at residues 35–55 (GIGG…LLFI), 70–90 (STIV…GGWI), 105–125 (VLFL…VIIV), 128–148 (IFVG…ISEA), 162–182 (GLLI…FVHT), 188–208 (WMLG…LSLP), 290–310 (FVGI…AGYA), 317–337 (ALSL…MMFV), 345–365 (LMII…TVFS), 456–476 (FGFL…PGMG), 494–514 (LGGG…SESF), and 525–545 (GTFL…WLLV).

It belongs to the major facilitator superfamily. Sugar transporter (TC 2.A.1.1) family. In terms of tissue distribution, highly expressed in pollen and phloem companion cells.

It is found in the cell membrane. Plasma membrane inositol-proton symporter. Mediates high-affinity myoinositol-proton symport across the plasma membrane. Active with myoinositol, scylloinositol and D-chiroinositol. Low activity with mucoinositol and alloinositol. In Arabidopsis thaliana (Mouse-ear cress), this protein is Inositol transporter 4 (INT4).